The following is a 298-amino-acid chain: N-acetylmuramic acid 6-phosphate etherase (298 aa).

The region spanning 55–218 (IHAQVSGGGR…STGLMIKSGK (164 aa)) is the SIS domain. The Proton donor role is filled by Glu-83. Glu-114 is a catalytic residue.

The protein belongs to the GCKR-like family. MurNAc-6-P etherase subfamily. As to quaternary structure, homodimer.

It catalyses the reaction N-acetyl-D-muramate 6-phosphate + H2O = N-acetyl-D-glucosamine 6-phosphate + (R)-lactate. It functions in the pathway amino-sugar metabolism; 1,6-anhydro-N-acetylmuramate degradation. The protein operates within amino-sugar metabolism; N-acetylmuramate degradation. It participates in cell wall biogenesis; peptidoglycan recycling. Its function is as follows. Specifically catalyzes the cleavage of the D-lactyl ether substituent of MurNAc 6-phosphate, producing GlcNAc 6-phosphate and D-lactate. Together with AnmK, is also required for the utilization of anhydro-N-acetylmuramic acid (anhMurNAc) either imported from the medium or derived from its own cell wall murein, and thus plays a role in cell wall recycling. In Escherichia coli O17:K52:H18 (strain UMN026 / ExPEC), this protein is N-acetylmuramic acid 6-phosphate etherase.